Here is a 148-residue protein sequence, read N- to C-terminus: Snaclec B1 (148 aa).

Positions 1 to 24 are cleaved as a signal peptide; it reads MGRIIFVSFGLLVVFLSLSGTGAA. Cystine bridges form between C27/C38, C55/C144, and C121/C136. The C-type lectin domain maps to 34 to 145; sequence YDQHCYKVFD…CRLLGHFVCK (112 aa).

Belongs to the snaclec family. As to quaternary structure, heterodimer; disulfide-linked. Expressed by the venom gland.

The protein localises to the secreted. In terms of biological role, interferes with one step of hemostasis (modulation of platelet aggregation, or coagulation cascade, for example). This chain is Snaclec B1, found in Macrovipera lebetinus (Levantine viper).